The primary structure comprises 390 residues: S-adenosylmethionine synthase 1 (390 aa).

Mg(2+) is bound at residue Glu9. His15 contacts ATP. Residue Glu43 participates in K(+) binding. L-methionine contacts are provided by Glu56 and Gln99. Residues 167-169 (DGK), 235-238 (SGRF), Asp246, 252-253 (RK), Ala269, Lys273, and Lys277 each bind ATP. Residue Asp246 participates in L-methionine binding. Lys277 serves as a coordination point for L-methionine.

Belongs to the AdoMet synthase family. In terms of assembly, homotetramer. Requires Mn(2+) as cofactor. The cofactor is Mg(2+). Co(2+) serves as cofactor. It depends on K(+) as a cofactor.

It is found in the cytoplasm. It catalyses the reaction L-methionine + ATP + H2O = S-adenosyl-L-methionine + phosphate + diphosphate. The protein operates within amino-acid biosynthesis; S-adenosyl-L-methionine biosynthesis; S-adenosyl-L-methionine from L-methionine: step 1/1. Functionally, catalyzes the formation of S-adenosylmethionine from methionine and ATP. The reaction comprises two steps that are both catalyzed by the same enzyme: formation of S-adenosylmethionine (AdoMet) and triphosphate, and subsequent hydrolysis of the triphosphate. The protein is S-adenosylmethionine synthase 1 (SAM1) of Actinidia chinensis var. chinensis (Chinese soft-hair kiwi).